Here is a 442-residue protein sequence, read N- to C-terminus: MDAWPRCLERLEAEFPPEDVHTWLKPLQAEDRGDSIVLYAPNAFIVDQVRERYLPRIRELLAYFAGNGEVALAVGSRPRAPEPAPAPVAATIAPQAAPIAPFAGNLDSHYTFANFVEGRSNQLGLAAAIQAAQKPGDRAHNPLLLYGSTGLGKTHLMFAAGNALRQAKPAAKVMYLRSEQFFSAMIRALQDKAMDQFKRQFQQIDALLIDDIQFFAGKDRTQEEFFHTFNALFDGRQQIILTCDRYPREVEGLEPRLKSRLAWGLSVAIDPPDFETRAAIVLAKARERGAEIPDDVAFLIAKKMRSNVRDLEGALNTLVARANFTGRSITVEFAQETLRDLLRAQQQAIGIPNIQKTVADYYGLQMKDLLSKRRTRSLARPRQVAMALAKELTEHSLPEIGDAFAGRDHTTVLHACRQIRTLMEADGKLREDWEKLIRKLSE.

The interval Met1–Gly75 is domain I, interacts with DnaA modulators. The domain II stretch occupies residues Gly75 to Gly104. Positions Asn105–Ala322 are domain III, AAA+ region. The ATP site is built by Gly150, Gly152, Lys153, and Thr154. The interval Asn323–Glu442 is domain IV, binds dsDNA.

The protein belongs to the DnaA family. In terms of assembly, oligomerizes as a right-handed, spiral filament on DNA at oriC.

The protein localises to the cytoplasm. Its function is as follows. Plays an essential role in the initiation and regulation of chromosomal replication. ATP-DnaA binds to the origin of replication (oriC) to initiate formation of the DNA replication initiation complex once per cell cycle. Binds the DnaA box (a 9 base pair repeat at the origin) and separates the double-stranded (ds)DNA. Forms a right-handed helical filament on oriC DNA; dsDNA binds to the exterior of the filament while single-stranded (ss)DNA is stabiized in the filament's interior. The ATP-DnaA-oriC complex binds and stabilizes one strand of the AT-rich DNA unwinding element (DUE), permitting loading of DNA polymerase. After initiation quickly degrades to an ADP-DnaA complex that is not apt for DNA replication. Binds acidic phospholipids. The protein is Chromosomal replication initiator protein DnaA of Xanthomonas oryzae pv. oryzae (strain PXO99A).